We begin with the raw amino-acid sequence, 238 residues long: Orotidine 5'-phosphate decarboxylase (238 aa).

Residues D10, K32, 59 to 68 (DLKLHDIPNT), T122, R184, Q193, G213, and R214 contribute to the substrate site. K61 serves as the catalytic Proton donor.

It belongs to the OMP decarboxylase family. Type 1 subfamily. As to quaternary structure, homodimer.

The catalysed reaction is orotidine 5'-phosphate + H(+) = UMP + CO2. It functions in the pathway pyrimidine metabolism; UMP biosynthesis via de novo pathway; UMP from orotate: step 2/2. Its function is as follows. Catalyzes the decarboxylation of orotidine 5'-monophosphate (OMP) to uridine 5'-monophosphate (UMP). This chain is Orotidine 5'-phosphate decarboxylase, found in Bacillus cereus (strain AH820).